Reading from the N-terminus, the 425-residue chain is G protein-activated inward rectifier potassium channel 2 (425 aa).

Topologically, residues 1–91 (MTMAKLTESM…IFTTLVDLKW (91 aa)) are cytoplasmic. Phosphoserine is present on residues S18 and S25. A helical transmembrane segment spans residues 92–116 (RFNLLIFVMVYTVTWLFFGMIWWLI). Residues 117 to 140 (AYIRGDMDHIEDPSWTPCVTNLNG) lie on the Extracellular side of the membrane. Residues 141–152 (FVSAFLFSIETE) constitute an intramembrane region (helical; Pore-forming). Positions 153-159 (TTIGYGY) form an intramembrane region, pore-forming. A Selectivity filter motif is present at residues 154–159 (TIGYGY). The Extracellular portion of the chain corresponds to 160 to 168 (RVITDKCPE). The chain crosses the membrane as a helical span at residues 169 to 190 (GIILLLIQSVLGSIVNAFMVGC). At 191-425 (MFVKISQPKK…VANLENESKV (235 aa)) the chain is on the cytoplasmic side. A disordered region spans residues 392 to 425 (NQHAELETEEEEKNPEELTERNGDVANLENESKV). The PDZ-binding signature appears at 422–425 (ESKV).

Belongs to the inward rectifier-type potassium channel (TC 1.A.2.1) family. KCNJ6 subfamily. In terms of assembly, associates with KCNJ3/GIRK1 or KCNJ5/GRIK4 to form a G-protein-activated heteromultimer pore-forming unit. The resulting inward current is much larger. Interacts (via PDZ-binding motif) with SNX27 (via PDZ domain); the interaction is required for recycling to the plasma membrane when endocytosed and prevent degradation in lysosomes. In terms of tissue distribution, pancreatic beta cells and brain.

Its subcellular location is the membrane. It catalyses the reaction K(+)(in) = K(+)(out). With respect to regulation, activated by phosphatidylinositol 4,5 biphosphate (PtdIns(4,5)P2). In terms of biological role, inward rectifier potassium channels are characterized by a greater tendency to allow potassium to flow into the cell rather than out of it. Their voltage dependence is regulated by the concentration of extracellular potassium; as external potassium is raised, the voltage range of the channel opening shifts to more positive voltages. The inward rectification is mainly due to the blockage of outward current by internal magnesium. This potassium channel may be involved in the regulation of insulin secretion by glucose and/or neurotransmitters acting through G-protein-coupled receptors. The chain is G protein-activated inward rectifier potassium channel 2 (Kcnj6) from Rattus norvegicus (Rat).